A 155-amino-acid polypeptide reads, in one-letter code: UPF0178 protein ACIAD2644 (155 aa).

A disordered region spans residues 120–155 (GAGVQTGGPPPISERDKREFSSALDQTILKQKRKTA).

Belongs to the UPF0178 family.

The protein is UPF0178 protein ACIAD2644 of Acinetobacter baylyi (strain ATCC 33305 / BD413 / ADP1).